Here is a 127-residue protein sequence, read N- to C-terminus: Large ribosomal subunit protein eL8 (127 aa).

It belongs to the eukaryotic ribosomal protein eL8 family. As to quaternary structure, part of the 50S ribosomal subunit. Probably part of the RNase P complex.

The protein resides in the cytoplasm. Functionally, multifunctional RNA-binding protein that recognizes the K-turn motif in ribosomal RNA, the RNA component of RNase P, box H/ACA, box C/D and box C'/D' sRNAs. This Aeropyrum pernix (strain ATCC 700893 / DSM 11879 / JCM 9820 / NBRC 100138 / K1) protein is Large ribosomal subunit protein eL8.